Consider the following 148-residue polypeptide: Hemoglobin subunit alpha (148 aa).

S1 carries the post-translational modification N-acetylserine. One can recognise a Globin domain in the interval 8–148; the sequence is DYSAADRAEL…VCHELSSRYR (141 aa). Residue H66 coordinates O2. A heme b-binding site is contributed by H95.

This sequence belongs to the globin family. Heterotetramer of two alpha chains and two beta chains. As to expression, red blood cells.

Involved in oxygen transport from the lung to the various peripheral tissues. The protein is Hemoglobin subunit alpha (HBA) of Heterodontus portusjacksoni (Port Jackson shark).